We begin with the raw amino-acid sequence, 1097 residues long: Protein kinase C-like 1 (1097 aa).

2 REM-1 domains span residues 2–76 and 106–183; these read STSQ…QMQR and KYEC…FSIN. The C2 domain maps to 189 to 311; the sequence is RDYEIMDSTK…AKDQGSSGWL (123 aa). Positions 304 to 359 are disordered; that stretch reads DQGSSGWLPAANLPQTGGSGAGTGSSMTGGASYGATSPLPAHNDLRPSVSPSSDAK. Low complexity predominate over residues 327 to 340; that stretch reads GSSMTGGASYGATS. 2 Phorbol-ester/DAG-type zinc fingers span residues 415–462 and 480–530; these read GHQF…VTKC and PHRF…PDFC. Disordered stretches follow at residues 548 to 594, 615 to 646, and 724 to 763; these read KVSP…LRPA, YQEPVELPPQQQNQVVPSTRRRGHGSTDLSFE, and ETSHAKQQNQQVQQVQQQEELGHQRTHSSGKSGKSKRRKR. A compositionally biased stretch (basic and acidic residues) spans 574-583; that stretch reads PSMDSEETLH. Residues 730 to 741 are compositionally biased toward low complexity; sequence QQNQQVQQVQQQ. Residues 747 to 763 show a composition bias toward basic residues; sequence QRTHSSGKSGKSKRRKR. The Protein kinase domain maps to 770–1029; sequence FQFLAVLGKG…AEEIMEHPYF (260 aa). ATP contacts are provided by residues 776–784 and lysine 799; that span reads LGKGNFGKV. Residue aspartate 895 is the Proton acceptor of the active site. The AGC-kinase C-terminal domain maps to 1030-1097; it reads HDVNFDDVLN…FSHISDNATI (68 aa).

This sequence belongs to the protein kinase superfamily. AGC Ser/Thr protein kinase family. PKC subfamily.

It carries out the reaction L-seryl-[protein] + ATP = O-phospho-L-seryl-[protein] + ADP + H(+). It catalyses the reaction L-threonyl-[protein] + ATP = O-phospho-L-threonyl-[protein] + ADP + H(+). Necessary for osmotic stability. This is Protein kinase C-like 1 (PKC1) from Candida albicans (Yeast).